The primary structure comprises 290 residues: Phosphoribosylaminoimidazole-succinocarboxamide synthase (290 aa).

It belongs to the SAICAR synthetase family.

It catalyses the reaction 5-amino-1-(5-phospho-D-ribosyl)imidazole-4-carboxylate + L-aspartate + ATP = (2S)-2-[5-amino-1-(5-phospho-beta-D-ribosyl)imidazole-4-carboxamido]succinate + ADP + phosphate + 2 H(+). It participates in purine metabolism; IMP biosynthesis via de novo pathway; 5-amino-1-(5-phospho-D-ribosyl)imidazole-4-carboxamide from 5-amino-1-(5-phospho-D-ribosyl)imidazole-4-carboxylate: step 1/2. The protein is Phosphoribosylaminoimidazole-succinocarboxamide synthase of Haemophilus influenzae (strain PittGG).